A 295-amino-acid polypeptide reads, in one-letter code: UDP-N-acetylenolpyruvoylglucosamine reductase (295 aa).

Residues 23–188 (KVGGPADFLA…ISAKFALKPG (166 aa)) enclose the FAD-binding PCMH-type domain. Residue R167 is part of the active site. The active-site Proton donor is S217. Residue E287 is part of the active site.

Belongs to the MurB family. FAD serves as cofactor.

It localises to the cytoplasm. It carries out the reaction UDP-N-acetyl-alpha-D-muramate + NADP(+) = UDP-N-acetyl-3-O-(1-carboxyvinyl)-alpha-D-glucosamine + NADPH + H(+). Its pathway is cell wall biogenesis; peptidoglycan biosynthesis. Cell wall formation. In Streptococcus pyogenes serotype M3 (strain ATCC BAA-595 / MGAS315), this protein is UDP-N-acetylenolpyruvoylglucosamine reductase.